Here is a 290-residue protein sequence, read N- to C-terminus: Shikimate dehydrogenase (NADP(+)) (290 aa).

Residues 24-26 and Thr-71 each bind shikimate; that span reads SLS. Lys-75 serves as the catalytic Proton acceptor. 2 residues coordinate shikimate: Asn-96 and Asp-111. NADP(+)-binding positions include 136–140, 160–165, and Leu-233; these read GAGGA and NRTVDR. Tyr-235 provides a ligand contact to shikimate. Gly-256 contacts NADP(+).

This sequence belongs to the shikimate dehydrogenase family. As to quaternary structure, homodimer.

The enzyme catalyses shikimate + NADP(+) = 3-dehydroshikimate + NADPH + H(+). It participates in metabolic intermediate biosynthesis; chorismate biosynthesis; chorismate from D-erythrose 4-phosphate and phosphoenolpyruvate: step 4/7. In terms of biological role, involved in the biosynthesis of the chorismate, which leads to the biosynthesis of aromatic amino acids. Catalyzes the reversible NADPH linked reduction of 3-dehydroshikimate (DHSA) to yield shikimate (SA). The polypeptide is Shikimate dehydrogenase (NADP(+)) (Methanopyrus kandleri (strain AV19 / DSM 6324 / JCM 9639 / NBRC 100938)).